A 607-amino-acid chain; its full sequence is Terpenoid synthase 9 (607 aa).

Positions 356, 360, 501, and 509 each coordinate Mg(2+). Residues 356 to 360 carry the DDXXD motif motif; sequence DDTFD.

Belongs to the terpene synthase family. Tpsa subfamily. It depends on Mg(2+) as a cofactor. Mn(2+) serves as cofactor. As to expression, predominantly expressed in roots but also in stems, leaves and flowers.

Its subcellular location is the cytoplasm. It functions in the pathway secondary metabolite biosynthesis; terpenoid biosynthesis. Involved in terpene biosynthesis in roots. Possesses diterpene (C20) synthase activity in vitro. Does not seem to be involved in sesquiterpene (C15) biosynthesis. This chain is Terpenoid synthase 9, found in Arabidopsis thaliana (Mouse-ear cress).